The sequence spans 266 residues: Putative carbamate hydrolase RutD (266 aa).

Residues 14–238 enclose the AB hydrolase-1 domain; sequence PVVVLSAGLG…RVEMPWGGHA (225 aa).

The protein belongs to the AB hydrolase superfamily. Hydrolase RutD family.

It catalyses the reaction carbamate + 2 H(+) = NH4(+) + CO2. Functionally, involved in pyrimidine catabolism. May facilitate the hydrolysis of carbamate, a reaction that can also occur spontaneously. In Klebsiella pneumoniae (strain 342), this protein is Putative carbamate hydrolase RutD.